Reading from the N-terminus, the 197-residue chain is Ribosome maturation factor RimM (197 aa).

In terms of domain architecture, PRC barrel spans 92–164 (DEGWYEHELV…YILVTPPPGL (73 aa)). A disordered region spans residues 167–197 (INVEDSGETSDAGESGPGEAEPGKAEAGDNA). A compositionally biased stretch (low complexity) spans 176-186 (SDAGESGPGEA). Basic and acidic residues predominate over residues 187-197 (EPGKAEAGDNA).

The protein belongs to the RimM family. As to quaternary structure, binds ribosomal protein uS19.

The protein localises to the cytoplasm. An accessory protein needed during the final step in the assembly of 30S ribosomal subunit, possibly for assembly of the head region. Essential for efficient processing of 16S rRNA. May be needed both before and after RbfA during the maturation of 16S rRNA. It has affinity for free ribosomal 30S subunits but not for 70S ribosomes. This chain is Ribosome maturation factor RimM, found in Arthrobacter sp. (strain FB24).